The chain runs to 220 residues: Elongation factor Ts, chloroplastic (220 aa).

This sequence belongs to the EF-Ts family.

Its subcellular location is the plastid. It localises to the chloroplast. Associates with the EF-Tu.GDP complex and induces the exchange of GDP to GTP. It remains bound to the aminoacyl-tRNA.EF-Tu.GTP complex up to the GTP hydrolysis stage on the ribosome. The sequence is that of Elongation factor Ts, chloroplastic (tsf) from Porphyra purpurea (Red seaweed).